The chain runs to 592 residues: A-type ATP synthase subunit A (592 aa).

233–240 serves as a coordination point for ATP; the sequence is GPFGSGKT.

It belongs to the ATPase alpha/beta chains family. In terms of assembly, has multiple subunits with at least A(3), B(3), C, D, E, F, H, I and proteolipid K(x).

The protein localises to the cell membrane. It catalyses the reaction ATP + H2O + 4 H(+)(in) = ADP + phosphate + 5 H(+)(out). Its function is as follows. Component of the A-type ATP synthase that produces ATP from ADP in the presence of a proton gradient across the membrane. The A chain is the catalytic subunit. This is A-type ATP synthase subunit A from Saccharolobus islandicus (strain Y.N.15.51 / Yellowstone #2) (Sulfolobus islandicus).